The primary structure comprises 291 residues: MEMO1 family protein TK1477 (291 aa).

Belongs to the MEMO1 family.

The chain is MEMO1 family protein TK1477 from Thermococcus kodakarensis (strain ATCC BAA-918 / JCM 12380 / KOD1) (Pyrococcus kodakaraensis (strain KOD1)).